We begin with the raw amino-acid sequence, 462 residues long: Histidine--tRNA ligase (462 aa).

It belongs to the class-II aminoacyl-tRNA synthetase family. In terms of assembly, homodimer.

It localises to the cytoplasm. The catalysed reaction is tRNA(His) + L-histidine + ATP = L-histidyl-tRNA(His) + AMP + diphosphate + H(+). The sequence is that of Histidine--tRNA ligase (hisS) from Nostoc sp. (strain PCC 7120 / SAG 25.82 / UTEX 2576).